We begin with the raw amino-acid sequence, 316 residues long: Malate dehydrogenase 2 (316 aa).

NAD(+) is bound by residues 10–15 (GGGQIG) and Asp34. Residues Arg83 and Arg89 each contribute to the substrate site. NAD(+)-binding positions include Asn96 and 119–121 (ISN). Residues Asn121 and Arg152 each contribute to the substrate site. His176 functions as the Proton acceptor in the catalytic mechanism.

This sequence belongs to the LDH/MDH superfamily. MDH type 3 family.

The enzyme catalyses (S)-malate + NAD(+) = oxaloacetate + NADH + H(+). Catalyzes the reversible oxidation of malate to oxaloacetate. The sequence is that of Malate dehydrogenase 2 from Anaeromyxobacter dehalogenans (strain 2CP-C).